The sequence spans 366 residues: MTTAQKQWAAEGGLRWDGRMLAGAGLLAGCAGVAMIAGATAWAGHLGLSALTLAILLGMAIGHVPGHQRWLTAGTIQFARHTLLRAGVVLYGARLTLAQVHDLGASGVVIPLLVLAATMLSGAWVGTRVFGLSRSQAVLVAAGSAVCGAAAVLAVAPAVKASPRETAVAIASVVLFGTAGIFLYPWLYALAMHAGVAVAPAHFGVYIGSTLHEVAQVIAAARPLGDDAANAAVVSKMVRVLALAPLLVVLACTMPAEGLVLEAGSGEGALRRATGHAWRAMPWFAAGLLGVALLNSGGAIPATWHAPIDAIDTGMLACAMFAIGTQTHVPMLLKSGVRPLLCAGVLWVGLVAGGAAINAGVRWLAG.

A run of 8 helical transmembrane segments spans residues 21 to 43 (LAGAGLLAGCAGVAMIAGATAWA), 103 to 125 (LGASGVVIPLLVLAATMLSGAWV), 137 to 159 (AVLVAAGSAVCGAAAVLAVAPAV), 169 to 191 (AIASVVLFGTAGIFLYPWLYALA), 198 to 220 (VAPAHFGVYIGSTLHEVAQVIAA), 240 to 262 (VLALAPLLVVLACTMPAEGLVLE), 283 to 305 (WFAAGLLGVALLNSGGAIPATWH), and 343 to 365 (AGVLWVGLVAGGAAINAGVRWLA).

The protein belongs to the UPF0324 family.

The protein resides in the cell membrane. The sequence is that of UPF0324 membrane protein RSc1111 from Ralstonia nicotianae (strain ATCC BAA-1114 / GMI1000) (Ralstonia solanacearum).